Consider the following 474-residue polypeptide: Putative matrix metalloproteinase (474 aa).

Residues 1–17 (MIIYFAVITCSLKLCRS) form the signal peptide. H189 provides a ligand contact to Zn(2+). E190 is a catalytic residue. Residues H193 and H199 each coordinate Zn(2+). The stretch at 299–344 (AGVYDAISYVRGDLYVFVGDLHWRFDTSGMLHNGYPQPTGATWRLP) is one Hemopexin repeat.

Belongs to the peptidase M10A family. It depends on Zn(2+) as a cofactor.

This Heliothis virescens ascovirus 3e (HvAV-3e) protein is Putative matrix metalloproteinase.